A 153-amino-acid chain; its full sequence is Flagellar assembly factor FliW (153 aa).

This sequence belongs to the FliW family. In terms of assembly, interacts with translational regulator CsrA and flagellin(s).

Its subcellular location is the cytoplasm. Functionally, acts as an anti-CsrA protein, binds CsrA and prevents it from repressing translation of its target genes, one of which is flagellin. Binds to flagellin and participates in the assembly of the flagellum. The chain is Flagellar assembly factor FliW from Heliobacterium modesticaldum (strain ATCC 51547 / Ice1).